We begin with the raw amino-acid sequence, 463 residues long: Bifunctional protein GlmU (463 aa).

A pyrophosphorylase region spans residues methionine 1 to arginine 228. UDP-N-acetyl-alpha-D-glucosamine contacts are provided by residues leucine 10–glycine 13, lysine 24, glutamine 75, glycine 80–threonine 81, tyrosine 102–aspartate 104, glycine 138, glutamate 153, asparagine 168, and asparagine 226. Aspartate 104 is a binding site for Mg(2+). Asparagine 226 provides a ligand contact to Mg(2+). The interval valine 229–alanine 249 is linker. The N-acetyltransferase stretch occupies residues glycine 250 to alanine 463. Positions 332 and 350 each coordinate UDP-N-acetyl-alpha-D-glucosamine. Histidine 362 (proton acceptor) is an active-site residue. 2 residues coordinate UDP-N-acetyl-alpha-D-glucosamine: tyrosine 365 and asparagine 376. Acetyl-CoA-binding positions include alanine 379, asparagine 385 to tyrosine 386, serine 404, alanine 422, and arginine 439. The interval valine 437–alanine 463 is disordered. A compositionally biased stretch (basic and acidic residues) spans glutamine 453 to alanine 463.

It in the N-terminal section; belongs to the N-acetylglucosamine-1-phosphate uridyltransferase family. The protein in the C-terminal section; belongs to the transferase hexapeptide repeat family. As to quaternary structure, homotrimer. It depends on Mg(2+) as a cofactor.

It is found in the cytoplasm. It catalyses the reaction alpha-D-glucosamine 1-phosphate + acetyl-CoA = N-acetyl-alpha-D-glucosamine 1-phosphate + CoA + H(+). The enzyme catalyses N-acetyl-alpha-D-glucosamine 1-phosphate + UTP + H(+) = UDP-N-acetyl-alpha-D-glucosamine + diphosphate. Its pathway is nucleotide-sugar biosynthesis; UDP-N-acetyl-alpha-D-glucosamine biosynthesis; N-acetyl-alpha-D-glucosamine 1-phosphate from alpha-D-glucosamine 6-phosphate (route II): step 2/2. It functions in the pathway nucleotide-sugar biosynthesis; UDP-N-acetyl-alpha-D-glucosamine biosynthesis; UDP-N-acetyl-alpha-D-glucosamine from N-acetyl-alpha-D-glucosamine 1-phosphate: step 1/1. The protein operates within bacterial outer membrane biogenesis; LPS lipid A biosynthesis. Catalyzes the last two sequential reactions in the de novo biosynthetic pathway for UDP-N-acetylglucosamine (UDP-GlcNAc). The C-terminal domain catalyzes the transfer of acetyl group from acetyl coenzyme A to glucosamine-1-phosphate (GlcN-1-P) to produce N-acetylglucosamine-1-phosphate (GlcNAc-1-P), which is converted into UDP-GlcNAc by the transfer of uridine 5-monophosphate (from uridine 5-triphosphate), a reaction catalyzed by the N-terminal domain. In Alkalilimnicola ehrlichii (strain ATCC BAA-1101 / DSM 17681 / MLHE-1), this protein is Bifunctional protein GlmU.